The primary structure comprises 122 residues: uncharacterized protein (122 aa).

This is an uncharacterized protein from Arabidopsis thaliana (Mouse-ear cress).